The primary structure comprises 172 residues: Translation initiation factor IF-3 (172 aa).

Belongs to the IF-3 family. As to quaternary structure, monomer.

The protein localises to the cytoplasm. IF-3 binds to the 30S ribosomal subunit and shifts the equilibrium between 70S ribosomes and their 50S and 30S subunits in favor of the free subunits, thus enhancing the availability of 30S subunits on which protein synthesis initiation begins. The chain is Translation initiation factor IF-3 from Thermotoga maritima (strain ATCC 43589 / DSM 3109 / JCM 10099 / NBRC 100826 / MSB8).